Consider the following 306-residue polypeptide: tRNA pseudouridine synthase B (306 aa).

Residue D47 is the Nucleophile of the active site.

This sequence belongs to the pseudouridine synthase TruB family. Type 1 subfamily.

The enzyme catalyses uridine(55) in tRNA = pseudouridine(55) in tRNA. Functionally, responsible for synthesis of pseudouridine from uracil-55 in the psi GC loop of transfer RNAs. The protein is tRNA pseudouridine synthase B of Neisseria gonorrhoeae (strain NCCP11945).